The following is a 163-amino-acid chain: Nucleotide-binding protein Ava_2001 (163 aa).

It belongs to the YajQ family.

Functionally, nucleotide-binding protein. This Trichormus variabilis (strain ATCC 29413 / PCC 7937) (Anabaena variabilis) protein is Nucleotide-binding protein Ava_2001.